Reading from the N-terminus, the 134-residue chain is ATP synthase epsilon chain, chloroplastic (134 aa).

The protein belongs to the ATPase epsilon chain family. In terms of assembly, F-type ATPases have 2 components, CF(1) - the catalytic core - and CF(0) - the membrane proton channel. CF(1) has five subunits: alpha(3), beta(3), gamma(1), delta(1), epsilon(1). CF(0) has three main subunits: a, b and c.

The protein localises to the plastid. Its subcellular location is the chloroplast thylakoid membrane. Its function is as follows. Produces ATP from ADP in the presence of a proton gradient across the membrane. This Amborella trichopoda protein is ATP synthase epsilon chain, chloroplastic.